The primary structure comprises 2549 residues: Serine/threonine-protein kinase mTOR (2549 aa).

Methionine 1 carries the post-translational modification N-acetylmethionine. The interval 1 to 651 (MLGTGPATAT…HVVSQTAVQV (651 aa)) is interaction with NBN. 32 HEAT repeats span residues 16-53 (SSNV…MELR), 55-99 (MSQE…VEGG), 100-137 (NSTR…AMAG), 138-179 (DTFT…AISV), 180-220 (PTFF…LILT), 222-276 (QREP…RISS), 277-313 (MEGE…PRHI), 314-364 (TPFT…CCRD), 365-409 (LMEE…AFTD), 410-445 (TQYL…VAVR), 446-494 (SEFK…RAMG), 495-529 (PGIQ…RQIP), 530-563 (QLKK…GLAH), 564-596 (QLAS…EFEG), 597-636 (HSLT…SIHL), 637-683 (ISGH…DERF), 686-724 (HLAQ…MNPA), 727-766 (MPFL…NAPR), 769-811 (RPYM…VSGL), 814-853 (RKWV…STGY), 857-893 (PYRK…LLGA), 894-942 (LDPY…GNLP), 943-988 (LDEF…KCVQ), 989-1027 (FLPQ…KSHI), 1029-1068 (PYMD…GEFK), 1069-1105 (LYLP…LFGA), 1106-1144 (NLDD…RLTE), 1145-1188 (SLDF…GKKY), 1189-1225 (QIFI…LADE), 1226-1273 (EEDP…GAAR), 1274-1311 (RVSK…QAYN), and 1312-1345 (PMAR…ELAL). Serine 567 carries the phosphoserine modification. Residue threonine 1162 is modified to Phosphothreonine. Residue lysine 1218 is modified to N6-acetyllysine. Serine 1261 carries the phosphoserine modification. TPR repeat units follow at residues 1346–1382 (TSQD…GIVL), 1383–1408 (LGER…QKGP), 1409–1442 (TPAI…HFGE), 1443–1473 (LEIQ…NKDD), 1474–1507 (PELM…VNDE), 1508–1541 (TQAK…RDTH), 1542–1574 (DGAF…LDAE), 1575–1614 (LTAM…RREI), 1615–1649 (IRQI…PHED), 1650–1693 (MRTW…PTVH), 1694–1731 (PQVT…AQHA), 1732–1786 (IATE…DRSW), 1787–1846 (YKAW…STEG), 1898–1930 (NNLQ…VKAI), 1931–1970 (QIDT…YHPQ), and 1971–2005 (ALIY…SNTL). Residues 1382–1982 (LLGERAAKCR…IYPLTVASKS (601 aa)) form the FAT domain. Residues lysine 1662, lysine 1702, and arginine 1749 each coordinate 1D-myo-inositol hexakisphosphate. The tract at residues 1812 to 1867 (DEKKKLRHASGANITNATTTATTAASAAAATSTEGSNSESEAESNESSPTPSPLQK) is disordered. Low complexity predominate over residues 1826 to 1860 (TNATTTATTAASAAAATSTEGSNSESEAESNESSP). Positions 2012 to 2144 (VSEELIRVAI…DLELAVPGTY (133 aa)) are sufficient for interaction with the FKBP1A/rapamycin complex. Lysine 2066 is covalently cross-linked (Glycyl lysine isopeptide (Lys-Gly) (interchain with G-Cter in ubiquitin)). The PI3K/PI4K catalytic domain occupies 2156–2469 (IAPSLQVITS…GVELGEPAHK (314 aa)). Serine 2159 is modified (phosphoserine). Positions 2162–2168 (VITSKQR) are G-loop. Threonine 2164 bears the Phosphothreonine mark. ATP is bound by residues serine 2165 and glutamine 2167. Phosphothreonine; by PKB/AKT1 is present on threonine 2173. Positions 2185, 2187, 2190, 2225, 2238, 2239, 2240, and 2245 each coordinate ATP. An interaction with MLST8 region spans residues 2258–2296 (KILLNIEHRIMLRMAPDYDHLTLMQKVEVFEHAVNNTAG). The tract at residues 2335–2343 (GLGDRHPSN) is catalytic loop. Asparagine 2343 contributes to the Mg(2+) binding site. Residues methionine 2345 and isoleucine 2356 each contribute to the ATP site. The segment at 2355-2380 (HIDFGDCFEVAMTREKFPEKIPFRLT) is activation loop. Residue aspartate 2357 participates in Mg(2+) binding. Position 2446 is a phosphothreonine; by RPS6KB1 (threonine 2446). Serine 2448 bears the Phosphoserine; by RPS6KB1 mark. Serine 2478 carries the post-translational modification Phosphoserine. Serine 2481 bears the Phosphoserine; by autocatalysis mark. An FATC domain is found at 2517-2549 (DTLDVPTQVELLIKQATSHENLCQCYIGWCPFW).

The protein belongs to the PI3/PI4-kinase family. Part of the mechanistic target of rapamycin complex 1 (mTORC1) which contains MTOR, MLST8 and RPTOR. The mTORC1 complex is a 1 Md obligate dimer of two stoichiometric heterotetramers with overall dimensions of 290 A x 210 A x 135 A. It has a rhomboid shape and a central cavity, the dimeric interfaces are formed by interlocking interactions between the two MTOR and the two RPTOR subunits. The MLST8 subunit forms distal foot-like protuberances, and contacts only one MTOR within the complex, while the small AKT1S1/PRAS40 localizes to the midsection of the central core, in close proximity to RPTOR. mTORC1 associates with AKT1S1/PRAS40, which inhibits its activity by blocking MTOR substrate-recruitment site. Component of the mechanistic target of rapamycin complex 2 (mTORC2), consisting in two heterotretramers composed of MTOR, MLST8, RICTOR and MAPKAP1/SIN1. Interacts with PLPP7 and PML. Interacts with PRR5 and RICTOR; the interaction is direct within the mTORC2 complex and interaction with RICTOR is enhanced by deubiquitination of RICTOR by USP9X. mTORC1 and mTORC2 associate with DEPTOR, which regulates their activity. Interacts with WAC; WAC positively regulates MTOR activity by promoting the assembly of the TTT complex composed of TELO2, TTI1 and TTI2 and the RUVBL complex composed of RUVBL1 and RUVBL2 into the TTT-RUVBL complex which leads to the dimerization of the mTORC1 complex and its subsequent activation. Interacts with UBQLN1. Interacts with TTI1 and TELO2. Interacts with CLIP1; phosphorylates and regulates CLIP1. Interacts with NBN. Interacts with HTR6. Interacts with BRAT1. Interacts with MEAK7 (via C-terminal domain); the interaction increases upon nutrient stimulation. Interacts with TM4SF5; the interaction is positively regulated by arginine and is negatively regulated by leucine. Interacts with GPR137B. Interacts with NCKAP1L. Interacts with TPCN1 and TPCN2; the interaction is required for TPCN1 and TPCN2 sensitivity to ATP. Interacts with ATP6V1A and with CRYAB, forming a ternary complex. Interacts with SLC38A7; this interaction mediates the recruitment of mTORC1 to the lysosome and its subsequent activation. Interacts with TSPAN8. Autophosphorylates when part of mTORC1 or mTORC2. Phosphorylation at Ser-1261, Ser-2159 and Thr-2164 promotes autophosphorylation. Phosphorylated at Ser-2448 by RPS6KB1. Phosphorylation in the kinase domain modulates the interactions of MTOR with RPTOR and AKT1S1/PRAS40 and leads to increased intrinsic mTORC1 kinase activity. Phosphorylation at Ser-2159 by TBK1 in response to growth factors and pathogen recognition receptors promotes mTORC1 activity. Phosphorylation at Ser-2159 by TBK1 in response to EGF growth factor promotes mTORC2 activity, leading to AKT1 phosphorylation and activation. Phosphorylation at Thr-2173 in the ATP-binding region by AKT1 strongly reduces kinase activity. Post-translationally, ubiquitinated at Lys-2066 by the SCF(FBXO22) complex via 'Lys-27'-linked ubiquitination prevents mTORC1 substrate recruitment.

Its subcellular location is the lysosome membrane. The protein resides in the endoplasmic reticulum membrane. It is found in the golgi apparatus membrane. It localises to the cell membrane. The protein localises to the mitochondrion outer membrane. Its subcellular location is the cytoplasm. The protein resides in the nucleus. It is found in the PML body. It localises to the microsome membrane. The protein localises to the cytoplasmic vesicle. Its subcellular location is the phagosome. The enzyme catalyses L-seryl-[protein] + ATP = O-phospho-L-seryl-[protein] + ADP + H(+). The catalysed reaction is L-threonyl-[protein] + ATP = O-phospho-L-threonyl-[protein] + ADP + H(+). It carries out the reaction L-tyrosyl-[protein] + ATP = O-phospho-L-tyrosyl-[protein] + ADP + H(+). With respect to regulation, the mTORC1 complex is activated in response to nutrients, growth factors or amino acids: activation requires relocalization of the mTORC1 complex to lysosomes that is mediated by the Ragulator complex, SLC38A9, and the Rag GTPases RagA/RRAGA, RagB/RRAGB, RagC/RRAGC and RagD/RRAGD. Activation of mTORC1 by growth factors such as insulin involves AKT1-mediated phosphorylation of TSC1-TSC2, which leads to the activation of the RHEB GTPase a potent activator of the protein kinase activity of mTORC1. Insulin-stimulated and amino acid-dependent phosphorylation at Ser-1261 promotes autophosphorylation and the activation of mTORC1. On the other hand, low cellular energy levels can inhibit mTORC1 through activation of PRKAA1 while hypoxia inhibits mTORC1 through a REDD1-dependent mechanism which may also require PRKAA1. The kinase activity of MTOR within the mTORC1 complex is positively regulated by MLST8. The kinase activity of MTOR is inhibited by DEPTOR and AKT1S1. The non-canonical mTORC1 complex is independent of the RHEB GTPase and specifically mediates phosphorylation of MiT/TFE factors TFEB and TFE3 but not other mTORC1 substrates: it is activated by FLCN, which activates Rag GTPases RagC/RRAGC and RagD/RRAGD. MTOR is the target of the immunosuppressive and anti-cancer drug rapamycin which acts in complex with FKBP1A/FKBP12, and specifically inhibits its kinase activity. mTORC2 is also activated by growth factors, but seems to be nutrient-insensitive. mTORC2 associates and is directly activated by ribosomes. mTORC2 may also be regulated by RHEB but in an indirect manner through the PI3K signaling pathway. In terms of biological role, serine/threonine protein kinase which is a central regulator of cellular metabolism, growth and survival in response to hormones, growth factors, nutrients, energy and stress signals. MTOR directly or indirectly regulates the phosphorylation of at least 800 proteins. Functions as part of 2 structurally and functionally distinct signaling complexes mTORC1 and mTORC2 (mTOR complex 1 and 2). In response to nutrients, growth factors or amino acids, mTORC1 is recruited to the lysosome membrane and promotes protein, lipid and nucleotide synthesis by phosphorylating key regulators of mRNA translation and ribosome synthesis. This includes phosphorylation of EIF4EBP1 and release of its inhibition toward the elongation initiation factor 4E (eiF4E). Moreover, phosphorylates and activates RPS6KB1 and RPS6KB2 that promote protein synthesis by modulating the activity of their downstream targets including ribosomal protein S6, eukaryotic translation initiation factor EIF4B, and the inhibitor of translation initiation PDCD4. Stimulates the pyrimidine biosynthesis pathway, both by acute regulation through RPS6KB1-mediated phosphorylation of the biosynthetic enzyme CAD, and delayed regulation, through transcriptional enhancement of the pentose phosphate pathway which produces 5-phosphoribosyl-1-pyrophosphate (PRPP), an allosteric activator of CAD at a later step in synthesis, this function is dependent on the mTORC1 complex. Regulates ribosome synthesis by activating RNA polymerase III-dependent transcription through phosphorylation and inhibition of MAF1 an RNA polymerase III-repressor. Activates dormant ribosomes by mediating phosphorylation of SERBP1, leading to SERBP1 inactivation and reactivation of translation. In parallel to protein synthesis, also regulates lipid synthesis through SREBF1/SREBP1 and LPIN1. To maintain energy homeostasis mTORC1 may also regulate mitochondrial biogenesis through regulation of PPARGC1A. In the same time, mTORC1 inhibits catabolic pathways: negatively regulates autophagy through phosphorylation of ULK1. Under nutrient sufficiency, phosphorylates ULK1 at 'Ser-758', disrupting the interaction with AMPK and preventing activation of ULK1. Also prevents autophagy through phosphorylation of the autophagy inhibitor DAP. Also prevents autophagy by phosphorylating RUBCNL/Pacer under nutrient-rich conditions. Prevents autophagy by mediating phosphorylation of AMBRA1, thereby inhibiting AMBRA1 ability to mediate ubiquitination of ULK1 and interaction between AMBRA1 and PPP2CA. mTORC1 exerts a feedback control on upstream growth factor signaling that includes phosphorylation and activation of GRB10 a INSR-dependent signaling suppressor. Among other potential targets mTORC1 may phosphorylate CLIP1 and regulate microtubules. The mTORC1 complex is inhibited in response to starvation and amino acid depletion. The non-canonical mTORC1 complex, which acts independently of RHEB, specifically mediates phosphorylation of MiT/TFE factors TFEB and TFE3 in the presence of nutrients, promoting their cytosolic retention and inactivation. Upon starvation or lysosomal stress, inhibition of mTORC1 induces dephosphorylation and nuclear translocation of TFEB and TFE3, promoting their transcription factor activity. The mTORC1 complex regulates pyroptosis in macrophages by promoting GSDMD oligomerization. MTOR phosphorylates RPTOR which in turn inhibits mTORC1. As part of the mTORC2 complex, MTOR transduces signals from growth factors to pathways involved in proliferation, cytoskeletal organization, lipogenesis and anabolic output. In response to growth factors, mTORC2 phosphorylates and activates AGC protein kinase family members, including AKT (AKT1, AKT2 and AKT3), PKC (PRKCA, PRKCB and PRKCE) and SGK1. In contrast to mTORC1, mTORC2 is nutrient-insensitive. mTORC2 plays a critical role in AKT1 activation by mediating phosphorylation of different sites depending on the context, such as 'Thr-450', 'Ser-473', 'Ser-477' or 'Thr-479', facilitating the phosphorylation of the activation loop of AKT1 on 'Thr-308' by PDPK1/PDK1 which is a prerequisite for full activation. mTORC2 also regulates the phosphorylation of SGK1 at 'Ser-422'. mTORC2 may regulate the actin cytoskeleton, through phosphorylation of PRKCA, PXN and activation of the Rho-type guanine nucleotide exchange factors RHOA and RAC1A or RAC1B. The mTORC2 complex also phosphorylates various proteins involved in insulin signaling, such as FBXW8 and IGF2BP1. May also regulate insulin signaling by acting as a tyrosine protein kinase that catalyzes phosphorylation of IGF1R and INSR. Regulates osteoclastogenesis by adjusting the expression of CEBPB isoforms. Plays an important regulatory role in the circadian clock function; regulates period length and rhythm amplitude of the suprachiasmatic nucleus (SCN) and liver clocks. The chain is Serine/threonine-protein kinase mTOR from Rattus norvegicus (Rat).